The sequence spans 380 residues: Alkaline protease (380 aa).

The first 27 residues, 1-27 (MKKPLGKIVASTALLISVAFSSSIASA), serve as a signal peptide directing secretion. Residues 28-111 (AEEAKEKYLI…IEEDAEVTTM (84 aa)) constitute a propeptide that is removed on maturation. In terms of domain architecture, Inhibitor I9 spans 34–111 (KYLIGFNEQE…IEEDAEVTTM (78 aa)). Position 113 (glutamine 113) interacts with Ca(2+). A Peptidase S8 domain is found at 116–379 (PWGISRVQAP…SGLVNAEAAT (264 aa)). The active-site Charge relay system is aspartate 143. Ca(2+) is bound at residue aspartate 151. Histidine 173 (charge relay system) is an active-site residue. Positions 184, 186, 188, 190, 274, 276, and 279 each coordinate Ca(2+). Serine 326 functions as the Charge relay system in the catalytic mechanism.

This sequence belongs to the peptidase S8 family. Ca(2+) is required as a cofactor.

The protein localises to the secreted. This is Alkaline protease from Shouchella clausii (Alkalihalobacillus clausii).